The chain runs to 237 residues: Isoprenyl transferase (237 aa).

The active site involves Asp14. Asp14 serves as a coordination point for Mg(2+). Substrate contacts are provided by residues 15–18 (GNGR), Trp19, Arg27, His31, and 59–61 (STE). The active-site Proton acceptor is the Asn62. Residues Trp63, Arg65, Arg184, and 190 to 192 (RIS) each bind substrate. Mg(2+) is bound at residue Glu203.

It belongs to the UPP synthase family. In terms of assembly, homodimer. Mg(2+) is required as a cofactor.

Its function is as follows. Catalyzes the condensation of isopentenyl diphosphate (IPP) with allylic pyrophosphates generating different type of terpenoids. This chain is Isoprenyl transferase, found in Helicobacter hepaticus (strain ATCC 51449 / 3B1).